The chain runs to 196 residues: Carnitine operon protein CaiE (196 aa).

The segment at Thr-173 to Arg-196 is disordered. The segment covering Gln-187–Arg-196 has biased composition (polar residues).

Belongs to the transferase hexapeptide repeat family.

Its pathway is amine and polyamine metabolism; carnitine metabolism. Overproduction of CaiE stimulates the activity of CaiB and CaiD. In Shigella dysenteriae serotype 1 (strain Sd197), this protein is Carnitine operon protein CaiE.